The chain runs to 565 residues: Proline--tRNA ligase (565 aa).

This sequence belongs to the class-II aminoacyl-tRNA synthetase family. ProS type 1 subfamily. As to quaternary structure, homodimer.

It is found in the cytoplasm. It carries out the reaction tRNA(Pro) + L-proline + ATP = L-prolyl-tRNA(Pro) + AMP + diphosphate. In terms of biological role, catalyzes the attachment of proline to tRNA(Pro) in a two-step reaction: proline is first activated by ATP to form Pro-AMP and then transferred to the acceptor end of tRNA(Pro). As ProRS can inadvertently accommodate and process non-cognate amino acids such as alanine and cysteine, to avoid such errors it has two additional distinct editing activities against alanine. One activity is designated as 'pretransfer' editing and involves the tRNA(Pro)-independent hydrolysis of activated Ala-AMP. The other activity is designated 'posttransfer' editing and involves deacylation of mischarged Ala-tRNA(Pro). The misacylated Cys-tRNA(Pro) is not edited by ProRS. This is Proline--tRNA ligase from Francisella tularensis subsp. holarctica (strain FTNF002-00 / FTA).